Reading from the N-terminus, the 198-residue chain is COMM domain-containing protein 9 (198 aa).

A2 is modified (N-acetylalanine). Positions 122–196 (RLVDLDWRVD…RIRDQLSAVA (75 aa)) constitute a COMM domain.

It belongs to the COMM domain-containing protein 9 family. As to quaternary structure, component of the commander complex consisting of the CCC subcomplex and the retriever subcomplex. Component of the CCC (COMMD/CCDC22/CCDC93) subcomplex consisting of COMMD1, COMMD2, COMMD3, COMMD4, COMMD5, COMMD6, COMMD7, COMMD8, COMMD9, COMMD10, CCDC22 and CCDC93; within the complex forms a heterodimer with COMMD7. Interacts with RELB and NFKB1/p105. Interacts with CCDC22, CCDC93, SCNN1B, CUL1. Ubiquitous.

It localises to the nucleus. The protein localises to the cytoplasmic vesicle. Functionally, scaffold protein in the commander complex that is essential for endosomal recycling of transmembrane cargos; the commander complex is composed of the CCC subcomplex and the retriever subcomplex. May modulate activity of cullin-RING E3 ubiquitin ligase (CRL) complexes. May down-regulate activation of NF-kappa-B. Modulates Na(+) transport in epithelial cells by regulation of apical cell surface expression of amiloride-sensitive sodium channel (ENaC) subunits. This Homo sapiens (Human) protein is COMM domain-containing protein 9 (COMMD9).